Here is a 127-residue protein sequence, read N- to C-terminus: Glycine cleavage system H protein (127 aa).

The region spanning 22-104 (NVRIGITDYA…YDKAWMIVVK (83 aa)) is the Lipoyl-binding domain. At K63 the chain carries N6-lipoyllysine.

This sequence belongs to the GcvH family. In terms of assembly, the glycine cleavage system is composed of four proteins: P, T, L and H. (R)-lipoate is required as a cofactor.

The glycine cleavage system catalyzes the degradation of glycine. The H protein shuttles the methylamine group of glycine from the P protein to the T protein. In terms of biological role, is also involved in protein lipoylation via its role as an octanoyl/lipoyl carrier protein intermediate. This is Glycine cleavage system H protein from Geobacillus kaustophilus (strain HTA426).